Consider the following 113-residue polypeptide: Guanylate cyclase activator 2B (113 aa).

The signal sequence occupies residues 1–27 (MASRAAAGLLLCGVALVFLVLLQGTQS). Residues 28 to 97 (VYIQYQGFRV…SIFQALRTIA (70 aa)) constitute a propeptide that is removed on maturation. 3 cysteine pairs are disulfide-bonded: Cys-68–Cys-81, Cys-101–Cys-109, and Cys-104–Cys-112.

This sequence belongs to the guanylin family.

It localises to the secreted. Functionally, endogenous activator of intestinal guanylate cyclase. It stimulates this enzyme through the same receptor binding region as the heat-stable enterotoxins. May be a potent physiological regulator of intestinal fluid and electrolyte transport. May be an autocrine/paracrine regulator of intestinal salt and water transport. In Sus scrofa (Pig), this protein is Guanylate cyclase activator 2B (GUCA2B).